Reading from the N-terminus, the 296-residue chain is MGAHLIDGKAIAQQLRERIAQEVADLKAHRGLVPGLAVVLVGEDAASQVYVGSKEKMAVAVGMHSVVCRLAATTSEAEVLAKVEALNADPTIDGILVQLPLPAHIDEDKILLAIDPDKDVDGFHPVNVGRLSIGQSNGEHGMVPCTPKGCLMLLKGVLGDLTGKTALVIGRSNIVGKPMAQLLLSANCTVTLAHSRSRDLPDLCRRMDIVVAAVGRPEMVKGDWLKPGAVVIDVGMNRLPAAPGAEKGKLVGDVDYASAAAVAGAITPVPGGVGPMTIACLLANTLEACKARGAGA.

NADP(+) contacts are provided by residues 170–172 (GRS) and S195.

This sequence belongs to the tetrahydrofolate dehydrogenase/cyclohydrolase family. As to quaternary structure, homodimer.

The catalysed reaction is (6R)-5,10-methylene-5,6,7,8-tetrahydrofolate + NADP(+) = (6R)-5,10-methenyltetrahydrofolate + NADPH. It catalyses the reaction (6R)-5,10-methenyltetrahydrofolate + H2O = (6R)-10-formyltetrahydrofolate + H(+). The protein operates within one-carbon metabolism; tetrahydrofolate interconversion. Catalyzes the oxidation of 5,10-methylenetetrahydrofolate to 5,10-methenyltetrahydrofolate and then the hydrolysis of 5,10-methenyltetrahydrofolate to 10-formyltetrahydrofolate. The sequence is that of Bifunctional protein FolD from Rhodospirillum rubrum (strain ATCC 11170 / ATH 1.1.1 / DSM 467 / LMG 4362 / NCIMB 8255 / S1).